The chain runs to 665 residues: Ion-translocating oxidoreductase complex subunit C (665 aa).

4Fe-4S ferredoxin-type domains lie at 368–398 and 408–437; these read EYAE…QQLY and KSEE…IQYF. C378, C381, C384, C388, C417, C420, C423, and C427 together coordinate [4Fe-4S] cluster. Composition is skewed to basic and acidic residues over residues 465 to 477 and 485 to 513; these read QARM…ERKA and ARRE…KANE. 3 disordered regions span residues 465–568, 580–623, and 637–665; these read QARM…DAKK, AKKL…LDPK, and KKLA…QIVR. Polar residues-rich tracts occupy residues 554-564 and 585-600; these read VENQEQQTQPT and QTNS…QTAE. Over residues 602–615 the composition is skewed to basic and acidic residues; sequence EVEKTKSAVEKTEE. Positions 643 to 656 are enriched in polar residues; the sequence is NSTSEAISNSQTAE.

Belongs to the 4Fe4S bacterial-type ferredoxin family. RnfC subfamily. The complex is composed of six subunits: RnfA, RnfB, RnfC, RnfD, RnfE and RnfG. Requires [4Fe-4S] cluster as cofactor.

The protein resides in the cell inner membrane. Its function is as follows. Part of a membrane-bound complex that couples electron transfer with translocation of ions across the membrane. The polypeptide is Ion-translocating oxidoreductase complex subunit C (Haemophilus influenzae (strain 86-028NP)).